We begin with the raw amino-acid sequence, 292 residues long: 4-diphosphocytidyl-2-C-methyl-D-erythritol kinase (292 aa).

The active site involves lysine 10. ATP is bound at residue 94-104 (PVAAGLAGGSS). Residue aspartate 136 is part of the active site.

Belongs to the GHMP kinase family. IspE subfamily.

The enzyme catalyses 4-CDP-2-C-methyl-D-erythritol + ATP = 4-CDP-2-C-methyl-D-erythritol 2-phosphate + ADP + H(+). Its pathway is isoprenoid biosynthesis; isopentenyl diphosphate biosynthesis via DXP pathway; isopentenyl diphosphate from 1-deoxy-D-xylulose 5-phosphate: step 3/6. In terms of biological role, catalyzes the phosphorylation of the position 2 hydroxy group of 4-diphosphocytidyl-2C-methyl-D-erythritol. The chain is 4-diphosphocytidyl-2-C-methyl-D-erythritol kinase from Brevibacillus brevis (strain 47 / JCM 6285 / NBRC 100599).